Consider the following 805-residue polypeptide: Polycystin-2-like protein 1 (805 aa).

A disordered region spans residues Met-1 to Glu-59. Topologically, residues Met-1–Glu-103 are cytoplasmic. Cys-38 is lipidated: S-palmitoyl cysteine. Residues Leu-104–Ser-124 traverse the membrane as a helical segment. The Extracellular portion of the chain corresponds to Ser-125–Glu-356. Residues Asn-177 and Asn-207 are each glycosylated (N-linked (GlcNAc...) asparagine). Cys-210 and Cys-223 form a disulfide bridge. N-linked (GlcNAc...) asparagine glycosylation is present at Asn-241. A helical transmembrane segment spans residues Val-357–Ile-376. The Ca(2+) site is built by Glu-370 and Glu-373. The Cytoplasmic portion of the chain corresponds to His-377 to Ser-384. The helical transmembrane segment at Ile-385–Ile-405 threads the bilayer. Asn-387 and Asp-390 together coordinate Ca(2+). The Extracellular segment spans residues Phe-406–Phe-433. The helical transmembrane segment at Trp-434–Phe-454 threads the bilayer. The Cytoplasmic portion of the chain corresponds to Lys-455 to Gly-479. The helical transmembrane segment at Phe-480–Phe-499 threads the bilayer. Residues Gly-500–Lys-511 lie on the Extracellular side of the membrane. Asn-505 is a glycosylation site (N-linked (GlcNAc...) asparagine). The pore-forming intramembrane region spans Cys-512–Tyr-526. Topologically, residues Asn-527–Leu-536 are extracellular. Residues Gly-537–Leu-557 form a helical membrane-spanning segment. The Cytoplasmic segment spans residues Ala-558 to Ser-805. The EF-hand domain maps to His-633–Glu-668. Coiled coils occupy residues Asn-650–Ser-686 and Gly-700–Arg-740. The required for homooligomerization stretch occupies residues Gly-704–Pro-763. The segment at Pro-759–Ser-805 is disordered. A compositionally biased stretch (basic and acidic residues) spans Val-780–Arg-796.

The protein belongs to the polycystin family. As to quaternary structure, oligomer. Functional PKD2L1 homotetramer can be formed either through C-terminal trimerization followed by N-terminal dimerization of a fourth subunit with a subunit in the trimer or through dimerization followed by trimerization. Heterotetramer with either PKD1L1, PKD1L3 or PKD1; the heterotetrameric complex contains three PKD1L2 chains plus one chain from another family member. Interacts with PKD1L1, forming a ciliary calcium channel. Interacts with PKD1L3, forming a cation channel that is activated by low extracellular pH. Interacts with PKD1; this heteromeric functional cation channels is opened by hypo-osmotic stimulation. Interacts with RACK1; inhibits the channel activity possibly by impairing localization to the cell membrane. Post-translationally, palmitoylation is important for expression at the cell membrane and for channel activity. In terms of tissue distribution, detected in taste bud cells in fungiform papillae (at protein level). Ubiquitous. Expressed in adult heart, skeletal muscle, brain, spleen, testis, retina and liver. Isoform 4 appears to be expressed only in transformed lymphoblasts.

It is found in the cell projection. The protein resides in the cilium membrane. It localises to the cell membrane. Its subcellular location is the cytoplasmic vesicle. The catalysed reaction is Ca(2+)(in) = Ca(2+)(out). It carries out the reaction Na(+)(in) = Na(+)(out). It catalyses the reaction K(+)(in) = K(+)(out). The enzyme catalyses Mg(2+)(in) = Mg(2+)(out). With respect to regulation, the non-selective cation channel is gated following an off-response property by acid: gated open after the removal of acid stimulus, but not during acid application. Channel activity is inhibited by phosphatidylinositol-4,5-bisphosphate (PIP2). Non-selective cation channel activity is substantially increased when either the extracellular or intracellular calcium-ion concentration is raised. Regulation of non-selective cation channel activity by external calcium is bimodal, first sensitizing and subsequently inactivating the current. Functionally, homotetrameric, non-selective cation channel that is permeable to sodium, potassium, magnesium and calcium. Also forms functionnal heteromeric channels with PKD1, PKD1L1 and PKD1L3. Pore-forming subunit of a heterotetrameric, non-selective cation channel, formed by PKD1L2 and PKD1L3, that is permeable to sodium, potassium, magnesium and calcium and which may act as a sour taste receptor in gustatory cells; however, its contribution to sour taste perception is unclear in vivo and may be indirect. The homomeric and heteromeric channels formed by PKD1L2 and PKD1L3 are activated by low pH and Ca(2+), but opens only when the extracellular pH rises again and after the removal of acid stimulus. Pore-forming subunit of a calcium-permeant ion channel formed by PKD1L2 and PKD1L1 in primary cilia, where it controls cilium calcium concentration, without affecting cytoplasmic calcium concentration, and regulates sonic hedgehog/SHH signaling and GLI2 transcription. The PKD1L1:PKD2L1 complex channel is mechanosensitive only at high pressures and is highly temperature sensitive. Pore-forming subunit of a calcium-permeant ion channel formed by PKD1L2 and PKD1 that produces a transient increase in intracellular calcium concentration upon hypo-osmotic stimulation (200 mOsm). May play a role in the perception of carbonation taste. May play a role in the sensory perception of water, via a mechanism that activates the channel in response to dilution of salivary bicarbonate and changes in salivary pH. In Homo sapiens (Human), this protein is Polycystin-2-like protein 1.